A 386-amino-acid polypeptide reads, in one-letter code: Ethanolamine kinase 2 (386 aa).

This sequence belongs to the choline/ethanolamine kinase family. Expressed in kidney, liver, ovary, testis and prostate.

It catalyses the reaction ethanolamine + ATP = phosphoethanolamine + ADP + H(+). It functions in the pathway phospholipid metabolism; phosphatidylethanolamine biosynthesis; phosphatidylethanolamine from ethanolamine: step 1/3. Functionally, highly specific for ethanolamine phosphorylation. Does not have choline kinase activity. This is Ethanolamine kinase 2 (ETNK2) from Homo sapiens (Human).